The sequence spans 372 residues: Glutamate 5-kinase (372 aa).

Lys-14 is a binding site for ATP. 3 residues coordinate substrate: Ser-54, Asp-141, and Asn-153. 173–174 (TD) is a binding site for ATP. The PUA domain maps to 280 to 358 (RGHVVIDDGA…GEIESVLGYM (79 aa)).

The protein belongs to the glutamate 5-kinase family.

It localises to the cytoplasm. It catalyses the reaction L-glutamate + ATP = L-glutamyl 5-phosphate + ADP. It participates in amino-acid biosynthesis; L-proline biosynthesis; L-glutamate 5-semialdehyde from L-glutamate: step 1/2. Functionally, catalyzes the transfer of a phosphate group to glutamate to form L-glutamate 5-phosphate. This is Glutamate 5-kinase from Paraburkholderia phymatum (strain DSM 17167 / CIP 108236 / LMG 21445 / STM815) (Burkholderia phymatum).